Reading from the N-terminus, the 214-residue chain is Pyrophosphatase PpaX (214 aa).

The active-site Nucleophile is Asp9.

Belongs to the HAD-like hydrolase superfamily. PpaX family. The cofactor is Mg(2+).

It catalyses the reaction diphosphate + H2O = 2 phosphate + H(+). Functionally, hydrolyzes pyrophosphate formed during P-Ser-HPr dephosphorylation by HPrK/P. Might play a role in controlling the intracellular pyrophosphate pool. This Oceanobacillus iheyensis (strain DSM 14371 / CIP 107618 / JCM 11309 / KCTC 3954 / HTE831) protein is Pyrophosphatase PpaX.